The chain runs to 239 residues: LexA repressor (239 aa).

The segment at residues 26 to 46 (FDEMKDALDLASKSGIHRLIT) is a DNA-binding region (H-T-H motif). Catalysis depends on for autocatalytic cleavage activity residues Ser159 and Lys197.

The protein belongs to the peptidase S24 family. Homodimer.

It catalyses the reaction Hydrolysis of Ala-|-Gly bond in repressor LexA.. Functionally, represses a number of genes involved in the response to DNA damage (SOS response), including recA and lexA. In the presence of single-stranded DNA, RecA interacts with LexA causing an autocatalytic cleavage which disrupts the DNA-binding part of LexA, leading to derepression of the SOS regulon and eventually DNA repair. The protein is LexA repressor of Rhizobium etli (strain CIAT 652).